The following is a 3503-amino-acid chain: Protein dachsous (3503 aa).

Positions 1–20 (MLRSSLLILLAIVLLGSSQA) are cleaved as a signal peptide. Residues 21-3045 (ASHDQERERK…SSSGSIGDWA (3025 aa)) are Extracellular-facing. 14 Cadherin domains span residues 22-121 (SHDQ…APTF), 122-233 (PQTS…QPIF), 234-340 (NQSR…QPTI), 345-451 (LSDD…PPEF), 452-558 (EQDL…EPIF), 559-662 (DQSF…RPVF), 663-774 (YPRE…PPIF), 775-878 (EKAR…APEF), 879-983 (EASM…PPVF), 984-1100 (EKDE…DPKF), 1101-1203 (QKSK…APEI), 1205-1312 (DPQE…RPTF), 1313-1432 (TSSS…APEW), and 1433-1549 (PQDP…APHF). N-linked (GlcNAc...) asparagine glycans are attached at residues Asn-220 and Asn-234. Residue Ser-236 is modified to Phosphoserine. 3 N-linked (GlcNAc...) asparagine glycosylation sites follow: Asn-245, Asn-381, and Asn-416. N-linked (GlcNAc...) asparagine glycosylation is found at Asn-564, Asn-594, and Asn-743. N-linked (GlcNAc...) asparagine glycosylation is found at Asn-966, Asn-991, Asn-1006, Asn-1029, Asn-1143, and Asn-1236. Asn-1453, Asn-1479, Asn-1524, and Asn-1553 each carry an N-linked (GlcNAc...) asparagine glycan. Cadherin domains lie at 1556–1666 (GGKT…PPRF), 1667–1794 (LQAV…SPEF), 1796–1899 (PGSC…APRF), 1900–2004 (KLSK…RPIF), 2005–2111 (ERYP…TPVL), 2114–2269 (QNET…SPKF), 2270–2375 (SQKQ…QPTF), 2375–2479 (FPPN…APVF), 2489–2595 (AILP…RSQF), 2596–2699 (LQNQ…FPIF), 2701–2809 (RSAK…EPKF), 2810–2916 (PLTE…TPQF), and 2919–3028 (RTYR…HPGT). N-linked (GlcNAc...) asparagine glycans are attached at residues Asn-1700, Asn-1884, and Asn-1940. N-linked (GlcNAc...) asparagine glycosylation occurs at Asn-2115. A disordered region spans residues 2193–2225 (GRALHYEEEIDESSEEDPNNSTRSQRALTSSSF). Over residues 2200-2210 (EEIDESSEEDP) the composition is skewed to acidic residues. 2 N-linked (GlcNAc...) asparagine glycosylation sites follow: Asn-2211 and Asn-2212. Positions 2211 to 2225 (NNSTRSQRALTSSSF) are enriched in polar residues. Asn-2421, Asn-2511, Asn-2520, Asn-2547, Asn-2588, and Asn-2678 each carry an N-linked (GlcNAc...) asparagine glycan. 2 N-linked (GlcNAc...) asparagine glycosylation sites follow: Asn-2845 and Asn-2967. Residues 3046–3066 (IGLLVAFLLVLCAAAGIFLFI) traverse the membrane as a helical segment. Topologically, residues 3067-3503 (HMRSRKPRNA…SQRGNVGTRM (437 aa)) are cytoplasmic. Disordered regions lie at residues 3114-3195 (AGAA…GRIS), 3360-3404 (LSEH…IPPP), and 3431-3503 (LPRS…GTRM). Composition is skewed to low complexity over residues 3133–3159 (GAHAGSSGAATTSELSGSEQSGSSGRG) and 3363–3372 (HSGSGASSSA). Residues 3391–3404 (KPPPSAPPTHIPPP) show a composition bias toward pro residues. Positions 3440–3463 (ASGSFSTSSAMSPSFSPSLSPLAT) are enriched in low complexity. Phosphoserine occurs at positions 3465 and 3469. Residues 3492–3503 (QPSQRGNVGTRM) show a composition bias toward polar residues.

Interacts (via cytoplasmic region) with Myo31DF. In terms of processing, phosphorylated by fj on Ser/Thr of cadherin domains. As to expression, expressed in embryonic ectoderm. In larvae, expression is restricted to imaginal disks and brain.

It localises to the cell membrane. It is found in the cell junction. In terms of biological role, required for normal morphogenesis of adult structures derived from imaginal disks. Plays a role in planar cell polarity and in determining body left-right asymmetry. Expression in segment H1 of the imaginal ring and interaction with Myo31DF are required to induce changes of cell shape and orientation in segment H2, which then gives rise to normal, dextral looping of the adult hindgut. This is Protein dachsous (ds) from Drosophila melanogaster (Fruit fly).